A 120-amino-acid chain; its full sequence is Ribosome-binding factor A (120 aa).

It belongs to the RbfA family. As to quaternary structure, monomer. Binds 30S ribosomal subunits, but not 50S ribosomal subunits or 70S ribosomes.

The protein localises to the cytoplasm. Its function is as follows. One of several proteins that assist in the late maturation steps of the functional core of the 30S ribosomal subunit. Associates with free 30S ribosomal subunits (but not with 30S subunits that are part of 70S ribosomes or polysomes). Required for efficient processing of 16S rRNA. May interact with the 5'-terminal helix region of 16S rRNA. This Clostridium botulinum (strain Okra / Type B1) protein is Ribosome-binding factor A.